The sequence spans 262 residues: tRNA pseudouridine synthase A (262 aa).

The active-site Nucleophile is D54. Y113 provides a ligand contact to substrate.

It belongs to the tRNA pseudouridine synthase TruA family. As to quaternary structure, homodimer.

It carries out the reaction uridine(38/39/40) in tRNA = pseudouridine(38/39/40) in tRNA. Its function is as follows. Formation of pseudouridine at positions 38, 39 and 40 in the anticodon stem and loop of transfer RNAs. In Lactobacillus acidophilus (strain ATCC 700396 / NCK56 / N2 / NCFM), this protein is tRNA pseudouridine synthase A.